A 312-amino-acid polypeptide reads, in one-letter code: Ribosomal protein L11 methyltransferase (312 aa).

The S-adenosyl-L-methionine site is built by threonine 160, glycine 181, aspartate 203, and asparagine 246.

The protein belongs to the methyltransferase superfamily. PrmA family.

The protein resides in the cytoplasm. It carries out the reaction L-lysyl-[protein] + 3 S-adenosyl-L-methionine = N(6),N(6),N(6)-trimethyl-L-lysyl-[protein] + 3 S-adenosyl-L-homocysteine + 3 H(+). Its function is as follows. Methylates ribosomal protein L11. The protein is Ribosomal protein L11 methyltransferase of Staphylococcus carnosus (strain TM300).